The chain runs to 248 residues: Probable transcriptional regulatory protein PSPTO_3980 (248 aa).

It belongs to the TACO1 family.

The protein resides in the cytoplasm. This is Probable transcriptional regulatory protein PSPTO_3980 from Pseudomonas syringae pv. tomato (strain ATCC BAA-871 / DC3000).